Here is a 351-residue protein sequence, read N- to C-terminus: Autophagy protein 5 (351 aa).

The interval 106-143 is disordered; sequence KSLSSPGSEREHYVRGGTRENISESGAEGEKDDNHGHD. Positions 113–143 are enriched in basic and acidic residues; sequence SEREHYVRGGTRENISESGAEGEKDDNHGHD. Residue Lys-186 forms a Glycyl lysine isopeptide (Lys-Gly) (interchain with G-Cter in ATG12) linkage.

The protein belongs to the ATG5 family. In terms of assembly, conjugated with ATG12. In terms of processing, conjugated to ATG12; which is essential for autophagy.

The protein resides in the preautophagosomal structure membrane. In terms of biological role, involved in cytoplasm to vacuole transport (Cvt) and autophagic vesicle formation. Autophagy is essential for maintenance of amino acid levels and protein synthesis under nitrogen starvation. Required for selective autophagic degradation of the nucleus (nucleophagy). Also required for mitophagy, which eliminates defective or superfluous mitochondria in order to fulfill cellular energy requirements and prevent excess ROS production. Conjugation with ATG12, through a ubiquitin-like conjugating system involving ATG7 as an E1-like activating enzyme and ATG10 as an E2-like conjugating enzyme, is essential for its function. The ATG12-ATG5 conjugate acts as an E3-like enzyme which is required for lipidation of ATG8 and ATG8 association to the vesicle membranes. The sequence is that of Autophagy protein 5 (ATG5) from Coccidioides immitis (strain RS) (Valley fever fungus).